The following is a 395-amino-acid chain: GPI-anchor transamidase (395 aa).

An N-terminal signal peptide occupies residues 1 to 27 (MAAPCFLTLRVATLAALALLSLGSSAA). Residues 28–368 (GHIEDQAEQF…PKPRDWHPPG (341 aa)) lie on the Lumenal side of the membrane. Ca(2+) is bound by residues D79, I82, E118, and D120. Catalysis depends on H164, which acts as the Proton donor. Residue C206 is the Nucleophile; acyl-thioester intermediate of the active site. Positions 206, 232, and 234 each coordinate a protein. The autoinhibitory loop stretch occupies residues 231-236 (DSLSHQ). Residues C275 and C280 are joined by a disulfide bond. A helical membrane pass occupies residues 369-385 (GFILGLWALIIMVFFKT). Topologically, residues 386 to 395 (YGIKHMKFIF) are cytoplasmic.

Belongs to the peptidase C13 family. As to quaternary structure, heteropentamer. Part of the GPI-anchor transamidase complex, consisting of PIGK, PIGT, PIGS, PIGU and GAA1. Interacts with GPAA1. Interacts with PIGT; this interaction, via a disulfide link, stabilizes the expression of GAA1 and PIGK and links them to PIGS. Post-translationally, the disulfide bond between PIGK/GPI8 and PIGT is important for normal enzyme activity.

The protein resides in the endoplasmic reticulum membrane. The protein operates within glycolipid biosynthesis; glycosylphosphatidylinositol-anchor biosynthesis. With respect to regulation, in the absence of proproteins substrates, exists in an inactive state with a disrupted catalytic site by an autoinhibitory loop. The binding of proprotein substrates, particularly the CSP region, to GPI-T triggers concerted conformational changes that alleviate the inhibition by the autoinhibitory loop. Meanwhile, proprotein residues near the omega- site induce the formation of a catalytic cleft for catalysis, following which the products are released and GPI-T reverts to the inactive state. In terms of biological role, catalytic subunit of the glycosylphosphatidylinositol-anchor (GPI-anchor) transamidase (GPI-T) complex that catalyzes the formation of the linkage between a proprotein and a GPI-anchor and participates in GPI anchored protein biosynthesis. Recognizes diverse proproteins at a C-terminal signal peptide (CSP) region that lacks consensus sequence and replaces it with a GPI-anchor via a transamidation reaction. Transamidation catalysis reaction follows a two-phase mechanism. In the acyl-enzyme phase, the carbonyl group of the proproteins's omega-site undergoes a nucleophilic attack forming an enzyme-substrate thioester bond. Followed by a general acid catalysis that allows CSP releasing, regenerating the carbonyl, and forming the acyl-enzyme intermediate. In the GPI-anchor attachment phase, the amino group of the GPI-anchor's ethanolamine phosphate, the one on third mannose (EtNP3), mediates a nucleophilic attack on the carbonyl of the acyl-enzyme intermediate, replacing the CSP, allowing GPI-anchor attachment to the omega-residue, therefore forming the product and freeing the enzyme. In Mus musculus (Mouse), this protein is GPI-anchor transamidase.